The sequence spans 1921 residues: Histone transcription regulator 3 homolog (1921 aa).

Disordered stretches follow at residues 350-439 (IGEV…LEKQ), 1402-1466 (GEDA…ATPV), 1738-1769 (PGSA…KTRV), and 1799-1921 (KGPP…SAPE). Composition is skewed to basic and acidic residues over residues 353-376 (VENK…KKEA) and 391-400 (TTVKTEDRDS). The span at 413-422 (GTTSSSQPPS) shows a compositional bias: polar residues. Positions 428-439 (RGADEPAELEKQ) are enriched in basic and acidic residues. Positions 1402-1425 (GEDADMESGDDSDSDSEVGSDSET) are enriched in acidic residues. Over residues 1757–1769 (GKKEDGKKEKTRV) the composition is skewed to basic and acidic residues. Residues 1806-1818 (SSNGSSSNSGTRS) show a composition bias toward low complexity. 2 stretches are compositionally biased toward basic and acidic residues: residues 1819-1836 (NSEE…KSTQ) and 1861-1890 (EADK…EKSA). A compositionally biased stretch (polar residues) spans 1899-1910 (TPKSKSTGSNGV).

Belongs to the HIR3 family.

The protein localises to the nucleus. Functionally, has a role in a nucleosome assembly pathway that is required for the integrity of heterochromatin and proper chromosome segregation. The protein is Histone transcription regulator 3 homolog (HIR3) of Yarrowia lipolytica (strain CLIB 122 / E 150) (Yeast).